The sequence spans 282 residues: Large ribosomal subunit protein uL2 (282 aa).

Residues R215–K282 form a disordered region. Over residues R263–K282 the composition is skewed to basic residues.

The protein belongs to the universal ribosomal protein uL2 family. Part of the 50S ribosomal subunit. Forms a bridge to the 30S subunit in the 70S ribosome.

One of the primary rRNA binding proteins. Required for association of the 30S and 50S subunits to form the 70S ribosome, for tRNA binding and peptide bond formation. It has been suggested to have peptidyltransferase activity; this is somewhat controversial. Makes several contacts with the 16S rRNA in the 70S ribosome. This is Large ribosomal subunit protein uL2 from Mesomycoplasma hyopneumoniae (strain J / ATCC 25934 / NCTC 10110) (Mycoplasma hyopneumoniae).